The sequence spans 144 residues: MASTRTTIIKLIVPAGKATPTPPIGPALGARGLKSIDFCKEFNARTAGWMPNTPVPCKITVTPQRTFTFTIHTPPTSWLISKTLDLEKGSSSPLHDIKGQLSLKHIYEIAKLKSTDPSLQGIELLSLCKSVIGTAKSMGVKVVP.

The N-terminal 32 residues, 1-32, are a transit peptide targeting the mitochondrion; the sequence is MASTRTTIIKLIVPAGKATPTPPIGPALGARG.

This sequence belongs to the universal ribosomal protein uL11 family. As to quaternary structure, component of the mitochondrial large ribosomal subunit (mt-LSU). Mature yeast 74S mitochondrial ribosomes consist of a small (37S) and a large (54S) subunit. The 37S small subunit contains a 15S ribosomal RNA (15S mt-rRNA) and at least 32 different proteins. The 54S large subunit contains a 21S rRNA (21S mt-rRNA) and at least 45 different proteins.

Its subcellular location is the mitochondrion. The protein localises to the cytoplasm. Component of the mitochondrial ribosome (mitoribosome), a dedicated translation machinery responsible for the synthesis of mitochondrial genome-encoded proteins, including at least some of the essential transmembrane subunits of the mitochondrial respiratory chain. The mitoribosomes are attached to the mitochondrial inner membrane and translation products are cotranslationally integrated into the membrane. The protein is Large ribosomal subunit protein uL11m of Schizosaccharomyces pombe (strain 972 / ATCC 24843) (Fission yeast).